The following is a 145-amino-acid chain: NADH-quinone oxidoreductase subunit A (145 aa).

Helical transmembrane passes span 14–34 (FAVF…GAWF), 66–86 (FYLV…LYAW), and 96–116 (VGFV…FYLV).

It belongs to the complex I subunit 3 family. In terms of assembly, NDH-1 is composed of 13 different subunits. Subunits NuoA, H, J, K, L, M, N constitute the membrane sector of the complex.

Its subcellular location is the cell inner membrane. It catalyses the reaction a quinone + NADH + 5 H(+)(in) = a quinol + NAD(+) + 4 H(+)(out). Its function is as follows. NDH-1 shuttles electrons from NADH, via FMN and iron-sulfur (Fe-S) centers, to quinones in the respiratory chain. The immediate electron acceptor for the enzyme in this species is believed to be ubiquinone. Couples the redox reaction to proton translocation (for every two electrons transferred, four hydrogen ions are translocated across the cytoplasmic membrane), and thus conserves the redox energy in a proton gradient. The protein is NADH-quinone oxidoreductase subunit A of Erwinia tasmaniensis (strain DSM 17950 / CFBP 7177 / CIP 109463 / NCPPB 4357 / Et1/99).